Here is a 239-residue protein sequence, read N- to C-terminus: Ribose-5-phosphate isomerase A (239 aa).

Substrate is bound by residues 30–33, 87–90, and 100–103; these read SGST, DGAD, and KGGG. Glu109 acts as the Proton acceptor in catalysis. Lys127 serves as a coordination point for substrate.

This sequence belongs to the ribose 5-phosphate isomerase family. As to quaternary structure, homodimer.

It catalyses the reaction aldehydo-D-ribose 5-phosphate = D-ribulose 5-phosphate. Its pathway is carbohydrate degradation; pentose phosphate pathway; D-ribose 5-phosphate from D-ribulose 5-phosphate (non-oxidative stage): step 1/1. Functionally, catalyzes the reversible conversion of ribose-5-phosphate to ribulose 5-phosphate. The chain is Ribose-5-phosphate isomerase A from Synechococcus sp. (strain CC9605).